Reading from the N-terminus, the 56-residue chain is Alpha-conotoxin TxIA (56 aa).

Residues 1 to 16 (MFTVFLLVVLATAVVS) form the signal peptide. The propeptide occupies 17–39 (FTSDRASDDGKAAASDLITLTIK). 2 disulfides stabilise this stretch: C41–C47 and C42–C55. A ser-Xaa-Pro motif, crucial for potent interaction with nAChR region spans residues 43-45 (SRP). 4-hydroxyproline; partial occurs at positions 45 and 46. C55 bears the Cysteine amide mark.

The protein belongs to the conotoxin A superfamily. In terms of processing, exists in 4 different forms, depending on hydroxylations. Tx1a-PP does not contain hydroxyproline, tx1a-OP has one hydroxyproline at position 45, tx1a-PO has one hydroxyproline at position 46, and tx1a-PP has two hydroxyprolines at positions 45 and 46. Expressed by the venom duct. Tx1a that containing 1 or 2 non-hydroxylated prolines are mostly present in part 5 of the venom duct (distal part near the pharynx), whereas tx1a-OO (with 2 hydroxyprolines) is mostly present in part 4 of the venom duct (follewed by part 3).

It is found in the secreted. Functionally, alpha-conotoxins act on postsynaptic membranes, they bind to the nicotinic acetylcholine receptors (nAChR) and thus inhibit them. This toxin inhibits rat alpha-3-beta-2/CHRNA3-CHRNB2 (IC(50)=3.5 nM), rat alpha-7/CHRNA7 (IC(50)=392 nM) nAChR, and the L.stagnalis soluble acetylcholine receptor (all tested without hydroxyproline). In Conus textile (Cloth-of-gold cone), this protein is Alpha-conotoxin TxIA.